Here is a 143-residue protein sequence, read N- to C-terminus: UPF0201 protein Pisl_1658 (143 aa).

It belongs to the UPF0201 family.

This is UPF0201 protein Pisl_1658 from Pyrobaculum islandicum (strain DSM 4184 / JCM 9189 / GEO3).